The chain runs to 363 residues: S-adenosylmethionine:tRNA ribosyltransferase-isomerase (363 aa).

It belongs to the QueA family. In terms of assembly, monomer.

It is found in the cytoplasm. The enzyme catalyses 7-aminomethyl-7-carbaguanosine(34) in tRNA + S-adenosyl-L-methionine = epoxyqueuosine(34) in tRNA + adenine + L-methionine + 2 H(+). The protein operates within tRNA modification; tRNA-queuosine biosynthesis. Transfers and isomerizes the ribose moiety from AdoMet to the 7-aminomethyl group of 7-deazaguanine (preQ1-tRNA) to give epoxyqueuosine (oQ-tRNA). This Brucella anthropi (strain ATCC 49188 / DSM 6882 / CCUG 24695 / JCM 21032 / LMG 3331 / NBRC 15819 / NCTC 12168 / Alc 37) (Ochrobactrum anthropi) protein is S-adenosylmethionine:tRNA ribosyltransferase-isomerase.